The primary structure comprises 1182 residues: MRAVLTWRDKAEQCIYDLAFKPDGTQLILAAGNRLLVYDTSDGTLLQPLKGHKDTVYCVAYAKDGKRFASGSADKSIIIWTSKLEGILKYTHNDSIQCVSYNPVTHQLASCSSSDFGLWSPEQKSVSKHKSSSKITCCSWTNDGQYLALGMANGIISIRNKNGEEKVKIERPGGSLSPIWSICWNPSREEHNDILAVADWGQKLSFYQLSGKQIGKDRPLNFDPCCISYFTKGEYILVGGSDKQVSLFTKDGVRLGTVGEQNSWVWTCRVKPDSNYVVVGCQDGTISFYQLIFSTVHGLYKDRYAYRDSMTDVIVQHLITEQKVRIKCRELVKKIAIYKNRLAIQLPEKILIYELYSEDSTDMHYRVKEKIVKKFECNLLVVCADHIILCQEKRLQCLSFSGVKEREWQMESLIRYIKVIGGPAGREGLLVGLKNGQILKIFVDNLFAIVLLKQATAVRCLDMSASRNKLAVVDENDTCLVYDIHTKELLFQEPNANSVAWNTQCEDMLCFSGGGYLNIKASTFPVHQQKLQGFVVGYNGSKIFCLHVFSMSAVEVPQSAPMYQYLDRKMFKEAYQIACLGVTDADWRELAMEALEGLEFETARKAFTRVQDLRYLELISSIEERKKRGETNNDLFLADVFSYQGKFHEAAKLYKRSGHENLALDMYTDLCMFEYAKDFLGSGDPKETKMLITKQADWARNINEPKAAVEMYISAGEHAKAIEISGSHGWVDMLIDIARKLDKAEREPLLMCACYFKKLDSPGYAAETYLKIGDLKSLVQLYVDTKRWDEAFALGEKHPEFKDDVYVPYAQWLAENDRFEEAQKAFHKAGRQGEAVRVLEQLTHNAVVESRFNDAAYYYWMLSMQCLDMAQDPAQKDAMLDKFHHFQHLAELYHGYQTIHRYTEEPFSFDLPETLFNISKFLLHSLTKATPLGISKVNTLFTLAKQSKALGAYKLARHAYDKLRGLQIPARIQKSIELGTLTIRSKPFHDSEELVPLCYRCSTNNPLLNNLGNVCINCRQPFIFSASSYEVLHLVEFYLEEGITDEEAVALIDLEAPRHKREGKWRETSSNNSQTLKLDETMDSIGEDDPFTAKLSFEQGSSEFVPVVVNRSVLRSMSRRDVLIKRWPPPLQWQYFRSLLPDASITMCPSCFQMFHSEDYELLVLQHACCPYCRRRIDDTGP.

8 WD repeats span residues 10 to 50 (KAEQ…QPLK), 51 to 91 (GHKD…LKYT), 93 to 129 (NDSI…VSKH), 131 to 169 (SSSK…KVKI), 174 to 217 (GSLS…IGKD), 219 to 258 (PLNF…LGTV), 260 to 300 (EQNS…HGLY), and 453 to 492 (KQAT…LLFQ).

Component of the IFT complex A (IFT-A) complex. IFT-A complex is divided into a core subcomplex composed of IFT122:IFT140:WDR19 which is associated with TULP3 and a peripheral subcomplex composed of IFT43:WDR35:TTC21B. Interacts with IFT43:WDR35; the interaction connects the 2 IFT-A subcomplexes. Interacts with IFTAP; the interaction associates IFTAP with IFT-A complex.

The protein resides in the cell projection. It is found in the cilium. Its subcellular location is the cytoplasm. The protein localises to the cytoskeleton. It localises to the cilium basal body. Its function is as follows. As a component of the IFT complex A (IFT-A), a complex required for retrograde ciliary transport and entry into cilia of G protein-coupled receptors (GPCRs), it is required in ciliogenesis and ciliary protein trafficking. Involved in cilia formation during neuronal patterning. Acts as a negative regulator of Shh signaling. Required to recruit TULP3 to primary cilia. This is Intraflagellar transport protein 122 homolog from Mus musculus (Mouse).